The chain runs to 290 residues: Transposon Ty3-G Gag polyprotein (290 aa).

Ser2 is modified (N-acetylserine). The CCHC-type zinc-finger motif lies at 265-282 (RLCFYCKKEGHRLNECRA).

Its subcellular location is the cytoplasm. Its function is as follows. Capsid protein (CA) is the structural component of the virus-like particle (VLP), forming the shell that encapsulates the retrotransposons dimeric RNA genome. Nucleocapsid protein p9 (NC) forms the nucleocore that coats the retro-elements dimeric RNA. Binds these RNAs through its zinc fingers. Promotes primer tRNA(i)-Met annealing to the multipartite primer-binding site (PBS), dimerization of Ty3 RNA and initiation of reverse transcription. The protein is Transposon Ty3-G Gag polyprotein (TY3A-G) of Saccharomyces cerevisiae (strain ATCC 204508 / S288c) (Baker's yeast).